Here is a 298-residue protein sequence, read N- to C-terminus: Elongation factor Ts (298 aa).

An involved in Mg(2+) ion dislocation from EF-Tu region spans residues 80-83 (TDFV).

It belongs to the EF-Ts family.

Its subcellular location is the cytoplasm. Associates with the EF-Tu.GDP complex and induces the exchange of GDP to GTP. It remains bound to the aminoacyl-tRNA.EF-Tu.GTP complex up to the GTP hydrolysis stage on the ribosome. The chain is Elongation factor Ts from Paracidovorax citrulli (strain AAC00-1) (Acidovorax citrulli).